The primary structure comprises 295 residues: Light-independent protochlorophyllide reductase iron-sulfur ATP-binding protein (295 aa).

Residues 10-15 and lysine 39 each bind ATP; that span reads GIGKST. Serine 14 is a Mg(2+) binding site. Positions 95 and 129 each coordinate [4Fe-4S] cluster. 180–181 is an ATP binding site; it reads NR. The segment covering 275–289 has biased composition (basic and acidic residues); that stretch reads TKDKKENKKEDKENS. The interval 275–295 is disordered; it reads TKDKKENKKEDKENSADFTWL.

It belongs to the NifH/BchL/ChlL family. As to quaternary structure, homodimer. Protochlorophyllide reductase is composed of three subunits; ChlL, ChlN and ChlB. Requires [4Fe-4S] cluster as cofactor.

It localises to the plastid. The protein resides in the chloroplast. The catalysed reaction is chlorophyllide a + oxidized 2[4Fe-4S]-[ferredoxin] + 2 ADP + 2 phosphate = protochlorophyllide a + reduced 2[4Fe-4S]-[ferredoxin] + 2 ATP + 2 H2O. It functions in the pathway porphyrin-containing compound metabolism; chlorophyll biosynthesis (light-independent). In terms of biological role, component of the dark-operative protochlorophyllide reductase (DPOR) that uses Mg-ATP and reduced ferredoxin to reduce ring D of protochlorophyllide (Pchlide) to form chlorophyllide a (Chlide). This reaction is light-independent. The L component serves as a unique electron donor to the NB-component of the complex, and binds Mg-ATP. This Physcomitrium patens (Spreading-leaved earth moss) protein is Light-independent protochlorophyllide reductase iron-sulfur ATP-binding protein.